The sequence spans 1221 residues: RNA exonuclease 1 homolog (1221 aa).

The span at 37 to 46 (RGSGAPGDGG) shows a compositional bias: gly residues. The interval 37–75 (RGSGAPGDGGEAPPAAGLGYDPYNPELPKPPAQRENGTL) is disordered. Residues 86–115 (LELELVNQAIEAVRSEVELEQRRYRELLET) adopt a coiled-coil conformation. Residues 116–598 (TREHRSAEAP…STSSAGADVD (483 aa)) form a disordered region. Omega-N-methylarginine is present on arginine 191. A phosphoserine mark is found at serine 287, serine 289, and serine 358. Residues 357–369 (ASPAQVQSSQDGG) show a composition bias toward low complexity. Basic and acidic residues predominate over residues 393–417 (AQGKDKTKDKGRGRPVEKPRADKKG). Phosphoserine is present on residues serine 459, serine 499, and serine 526. The segment covering 492-501 (LVERKARSLD) has biased composition (basic and acidic residues). An interaction with ELOA region spans residues 498–577 (RSLDEGASQD…KRLKASPPPS (80 aa)). Low complexity predominate over residues 580–593 (PSSSSSSSSSTSSA). Phosphoserine is present on serine 610. 2 disordered regions span residues 619 to 692 (IFNE…TAQE) and 735 to 775 (HIPN…TRTL). Residues 627 to 648 (KTEDRGRLARQPPKEEKSEEKG) are compositionally biased toward basic and acidic residues. Serine 914 bears the Phosphoserine mark. Residues 1060–1209 (IYALDCEMSY…EDAGACMHLV (150 aa)) form the Exonuclease domain.

Belongs to the REXO1/REXO3 family. As to quaternary structure, interacts with TCEA2 and ELOA. In terms of tissue distribution, ubiquitously expressed.

It localises to the nucleus. In terms of biological role, seems to have no detectable effect on transcription elongation in vitro. The chain is RNA exonuclease 1 homolog (REXO1) from Homo sapiens (Human).